The following is a 588-amino-acid chain: Aspartate--tRNA ligase (588 aa).

Glu172 provides a ligand contact to L-aspartate. The interval 196 to 199 (QLFK) is aspartate. Arg218 is an L-aspartate binding site. Residues 218-220 (RDE) and Gln227 each bind ATP. His449 contacts L-aspartate. Residue Glu483 coordinates ATP. Residue Arg490 coordinates L-aspartate. 535–538 (GLDR) is an ATP binding site.

It belongs to the class-II aminoacyl-tRNA synthetase family. Type 1 subfamily. Homodimer.

The protein localises to the cytoplasm. It catalyses the reaction tRNA(Asp) + L-aspartate + ATP = L-aspartyl-tRNA(Asp) + AMP + diphosphate. Functionally, catalyzes the attachment of L-aspartate to tRNA(Asp) in a two-step reaction: L-aspartate is first activated by ATP to form Asp-AMP and then transferred to the acceptor end of tRNA(Asp). This Haemophilus influenzae (strain PittEE) protein is Aspartate--tRNA ligase.